The sequence spans 103 residues: Histone H4 (103 aa).

Over residues 1 to 14 (MSGRGKGGKGLGKG) the composition is skewed to gly residues. The segment at 1-20 (MSGRGKGGKGLGKGGAKRHR) is disordered. S2 is subject to N-acetylserine. At K17 the chain carries N6-acetyllysine. The DNA-binding element occupies 17 to 21 (KRHRR). K80 is modified (N6-methylated lysine).

This sequence belongs to the histone H4 family. In terms of assembly, the nucleosome is a histone octamer containing two molecules each of H2A, H2B, H3 and H4 assembled in one H3-H4 heterotetramer and two H2A-H2B heterodimers. The octamer wraps approximately 147 bp of DNA.

It localises to the nucleus. The protein localises to the chromosome. Its function is as follows. Core component of nucleosome. Nucleosomes wrap and compact DNA into chromatin, limiting DNA accessibility to the cellular machineries which require DNA as a template. Histones thereby play a central role in transcription regulation, DNA repair, DNA replication and chromosomal stability. DNA accessibility is regulated via a complex set of post-translational modifications of histones, also called histone code, and nucleosome remodeling. The chain is Histone H4 from Olisthodiscus luteus (Marine phytoflagellate).